We begin with the raw amino-acid sequence, 181 residues long: ATP-dependent protease subunit HslV (181 aa).

Threonine 9 is an active-site residue. Residues serine 166, cysteine 169, and threonine 172 each contribute to the Na(+) site.

It belongs to the peptidase T1B family. HslV subfamily. As to quaternary structure, a double ring-shaped homohexamer of HslV is capped on each side by a ring-shaped HslU homohexamer. The assembly of the HslU/HslV complex is dependent on binding of ATP.

It localises to the cytoplasm. It carries out the reaction ATP-dependent cleavage of peptide bonds with broad specificity.. Allosterically activated by HslU binding. In terms of biological role, protease subunit of a proteasome-like degradation complex believed to be a general protein degrading machinery. In Staphylococcus haemolyticus (strain JCSC1435), this protein is ATP-dependent protease subunit HslV.